The following is a 192-amino-acid chain: MRVVLLGPPGAGKGTQAKMLTEEYNIPHLSTGDMLREVIAKETEVGKKAKAIISSGALVPDSIVNQIVSDRIDEADCINGFILDGYPRTVGQAEALQQILESKNMRLDAVIELCVNEDALIERMERRVQETVAAGGQVRLDDNPVAFAKRLVEYREKTSPLSKFYSERGMLKVIDGMIGIAEVTRIIKGFLS.

10 to 15 is an ATP binding site; it reads GAGKGT. Residues 30–59 are NMP; the sequence is STGDMLREVIAKETEVGKKAKAIISSGALV. Residues T31, R36, 57–59, 85–88, and Q92 each bind AMP; these read ALV and GYPR. Residues 126–142 are LID; sequence RRVQETVAAGGQVRLDD. R127 contacts ATP. Positions 139 and 150 each coordinate AMP. Position 178 (I178) interacts with ATP.

The protein belongs to the adenylate kinase family. In terms of assembly, monomer.

The protein localises to the cytoplasm. It carries out the reaction AMP + ATP = 2 ADP. It functions in the pathway purine metabolism; AMP biosynthesis via salvage pathway; AMP from ADP: step 1/1. Its function is as follows. Catalyzes the reversible transfer of the terminal phosphate group between ATP and AMP. Plays an important role in cellular energy homeostasis and in adenine nucleotide metabolism. The sequence is that of Adenylate kinase from Bartonella tribocorum (strain CIP 105476 / IBS 506).